A 233-amino-acid chain; its full sequence is Large ribosomal subunit protein uL1 (233 aa).

It belongs to the universal ribosomal protein uL1 family. In terms of assembly, part of the 50S ribosomal subunit.

In terms of biological role, binds directly to 23S rRNA. The L1 stalk is quite mobile in the ribosome, and is involved in E site tRNA release. Its function is as follows. Protein L1 is also a translational repressor protein, it controls the translation of the L11 operon by binding to its mRNA. This Campylobacter concisus (strain 13826) protein is Large ribosomal subunit protein uL1.